Here is a 217-residue protein sequence, read N- to C-terminus: uncharacterized protein (217 aa).

Residues 26–48 (VFMRGYVVGLVLALMLVTAPAMA) form a helical membrane-spanning segment.

Its subcellular location is the membrane. This is an uncharacterized protein from Archaeoglobus fulgidus (strain ATCC 49558 / DSM 4304 / JCM 9628 / NBRC 100126 / VC-16).